We begin with the raw amino-acid sequence, 163 residues long: Large ribosomal subunit protein uL10 (163 aa).

It belongs to the universal ribosomal protein uL10 family. As to quaternary structure, part of the ribosomal stalk of the 50S ribosomal subunit. The N-terminus interacts with L11 and the large rRNA to form the base of the stalk. The C-terminus forms an elongated spine to which L12 dimers bind in a sequential fashion forming a multimeric L10(L12)X complex.

In terms of biological role, forms part of the ribosomal stalk, playing a central role in the interaction of the ribosome with GTP-bound translation factors. The chain is Large ribosomal subunit protein uL10 from Mannheimia succiniciproducens (strain KCTC 0769BP / MBEL55E).